The following is a 221-amino-acid chain: Serine/arginine-rich splicing factor 2 (221 aa).

Positions 14 to 92 constitute an RRM domain; sequence TSLKVDNLTY…RELRVQMARY (79 aa). The disordered stretch occupies residues 91–221; it reads RYGRPPDSHH…SPEEEGAVSS (131 aa). Composition is skewed to basic residues over residues 117–171 and 179–189; these read RRSR…RSKS and SRSRSRSRSRS.

Belongs to the splicing factor SR family. In terms of processing, extensively phosphorylated on serine residues in the RS domain.

Its subcellular location is the nucleus. In terms of biological role, necessary for the splicing of pre-mRNA. It is required for formation of the earliest ATP-dependent splicing complex and interacts with spliceosomal components bound to both the 5'- and 3'-splice sites during spliceosome assembly. It also is required for ATP-dependent interactions of both U1 and U2 snRNPs with pre-mRNA. The chain is Serine/arginine-rich splicing factor 2 (SRSF2) from Gallus gallus (Chicken).